The chain runs to 354 residues: Putative Xaa-Pro aminopeptidase (354 aa).

Mn(2+) is bound by residues Asp-213, Asp-224, His-290, Glu-319, and Glu-333.

The protein belongs to the peptidase M24B family. The cofactor is Mn(2+).

It carries out the reaction Release of any N-terminal amino acid, including proline, that is linked to proline, even from a dipeptide or tripeptide.. The sequence is that of Putative Xaa-Pro aminopeptidase (pepP) from Mycoplasma genitalium (strain ATCC 33530 / DSM 19775 / NCTC 10195 / G37) (Mycoplasmoides genitalium).